We begin with the raw amino-acid sequence, 440 residues long: Enolase 1-2 (440 aa).

The substrate site is built by His160 and Glu169. Glu212 serves as the catalytic Proton donor. Positions 247, 296, and 321 each coordinate Mg(2+). Residues Glu296 and Asp321 each contribute to the substrate site. The active-site Proton acceptor is the Lys346. Substrate-binding positions include 373–376 (SHRS) and Lys397.

The protein belongs to the enolase family. Homodimer. The cofactor is Mg(2+).

It is found in the cytoplasm. It catalyses the reaction (2R)-2-phosphoglycerate = phosphoenolpyruvate + H2O. The protein operates within carbohydrate degradation; glycolysis; pyruvate from D-glyceraldehyde 3-phosphate: step 4/5. This is Enolase 1-2 (eno102) from Schizosaccharomyces pombe (strain 972 / ATCC 24843) (Fission yeast).